Reading from the N-terminus, the 256-residue chain is Ubiquinone/menaquinone biosynthesis C-methyltransferase UbiE (256 aa).

Residues M1 to P12 are compositionally biased toward basic and acidic residues. The disordered stretch occupies residues M1–P22. Residues T79, D100, and D128–A129 each bind S-adenosyl-L-methionine.

This sequence belongs to the class I-like SAM-binding methyltransferase superfamily. MenG/UbiE family.

The enzyme catalyses a 2-demethylmenaquinol + S-adenosyl-L-methionine = a menaquinol + S-adenosyl-L-homocysteine + H(+). It carries out the reaction a 2-methoxy-6-(all-trans-polyprenyl)benzene-1,4-diol + S-adenosyl-L-methionine = a 5-methoxy-2-methyl-3-(all-trans-polyprenyl)benzene-1,4-diol + S-adenosyl-L-homocysteine + H(+). The protein operates within quinol/quinone metabolism; menaquinone biosynthesis; menaquinol from 1,4-dihydroxy-2-naphthoate: step 2/2. It functions in the pathway cofactor biosynthesis; ubiquinone biosynthesis. Its function is as follows. Methyltransferase required for the conversion of demethylmenaquinol (DMKH2) to menaquinol (MKH2) and the conversion of 2-polyprenyl-6-methoxy-1,4-benzoquinol (DDMQH2) to 2-polyprenyl-3-methyl-6-methoxy-1,4-benzoquinol (DMQH2). This Pseudomonas putida (Arthrobacter siderocapsulatus) protein is Ubiquinone/menaquinone biosynthesis C-methyltransferase UbiE.